A 286-amino-acid polypeptide reads, in one-letter code: Ribosomal RNA small subunit methyltransferase H (286 aa).

S-adenosyl-L-methionine contacts are provided by residues 30–32 (GGH), Asp-49, Phe-88, Asp-97, and Gln-104. Positions 260–286 (HPLQPSDEESFNNPASRSAKLRALEMR) are disordered.

It belongs to the methyltransferase superfamily. RsmH family.

It localises to the cytoplasm. It carries out the reaction cytidine(1402) in 16S rRNA + S-adenosyl-L-methionine = N(4)-methylcytidine(1402) in 16S rRNA + S-adenosyl-L-homocysteine + H(+). In terms of biological role, specifically methylates the N4 position of cytidine in position 1402 (C1402) of 16S rRNA. The sequence is that of Ribosomal RNA small subunit methyltransferase H from Solibacter usitatus (strain Ellin6076).